The chain runs to 408 residues: Alpha-2Da adrenergic receptor (408 aa).

Topologically, residues 1 to 30 (MSVTPTANSTEEAANITASPRLWPYTEPAS) are extracellular. 2 N-linked (GlcNAc...) asparagine glycosylation sites follow: Asn-8 and Asn-15. Residues 31-55 (AIIILVVSLIILLTIVGNVLVIVAV) traverse the membrane as a helical segment. Topologically, residues 56–67 (LTSRALRAPQNL) are cytoplasmic. Residues 68–93 (FLVSLACADILVATLVIPFSLANEIM) form a helical membrane-spanning segment. The Extracellular segment spans residues 94-103 (GYWYFGSTWC). Cysteines 103 and 176 form a disulfide. A helical transmembrane segment spans residues 104 to 126 (AFYLALDVLFCTSSIVHLCAISL). Residues 127 to 147 (DRYWSVTKAVRYNLKRTPRRI) are Cytoplasmic-facing. Residues 148–170 (KCMIAVVWLISAVISFPPLIMTK) traverse the membrane as a helical segment. The Extracellular segment spans residues 171 to 181 (HDEKECLINDE). A helical transmembrane segment spans residues 182 to 205 (TWYILSSCAVSFFAPGLIMITVYC). At 206–332 (KIYRVAKQRS…QMREKRFTFV (127 aa)) the chain is on the cytoplasmic side. Residues 242–306 (FEKESPSSNS…SCRVSWAAHQ (65 aa)) form a disordered region. Residues 260–270 (ELDDIDLEESA) are compositionally biased toward acidic residues. Positions 277-286 (RGSRFSKRRR) are enriched in basic residues. A helical membrane pass occupies residues 333-356 (LAVVMGVFVLCWFPFFFTYSLQAV). The Extracellular portion of the chain corresponds to 357 to 369 (CGERCGPPEALFK). Residues 370–390 (LFFWIGYCNSSVNPIIYTIFN) traverse the membrane as a helical segment. Topologically, residues 391-408 (RDFRKAFKKVVCWSAQRT) are cytoplasmic.

The protein belongs to the G-protein coupled receptor 1 family. Adrenergic receptor subfamily. ADRA2D sub-subfamily.

The protein localises to the cell membrane. Its function is as follows. Alpha-2 adrenergic receptors mediate the catecholamine-induced inhibition of adenylate cyclase through the action of G proteins. The order of potency for this receptor is dexmedetomidine &gt; norepinephrine &gt; epinephrine &gt; oxymetazoline. This chain is Alpha-2Da adrenergic receptor (adra2da), found in Danio rerio (Zebrafish).